An 809-amino-acid polypeptide reads, in one-letter code: Protein TRC8 homolog (809 aa).

11 consecutive transmembrane segments (helical) span residues 124–144 (TVKF…FMLW), 147–167 (HLVM…SYWS), 200–220 (VMSL…FAYI), 233–253 (MPII…AKVV), 256–276 (LPVV…MQSA), 350–370 (LVDG…ISMF), 392–412 (LGTV…LTSL), 425–445 (LCLL…PILM), 461–481 (ALSV…HLWS), 488–508 (WLLA…VSLA), and 539–559 (SVEF…LIFE). An RING-type; atypical zinc finger spans residues 621–659 (CAICYQEMYSAKITRCRHFFHGVCLRKWLYVQDRCPLCH). Disordered stretches follow at residues 696–724 (NNAA…SSSA) and 752–788 (VASS…TSAA). Over residues 711–724 (EASEQAPATSSSSA) the composition is skewed to low complexity.

In terms of assembly, interacts with VHL. Interacts with the MPN domain of CSN5. Interacts with EIF3F and EIF3H.

It is found in the endoplasmic reticulum membrane. In terms of biological role, plays a role in growth inhibition that is dependent upon COP9 signalosome subunits CSN5 and CSN6. May modulate signalosome levels or compartmentalization. Probably functions in the same or a related pathway to VHL during early midline development. This is Protein TRC8 homolog from Drosophila melanogaster (Fruit fly).